Here is a 96-residue protein sequence, read N- to C-terminus: UPF0235 protein MK0273 (96 aa).

It belongs to the UPF0235 family.

The polypeptide is UPF0235 protein MK0273 (Methanopyrus kandleri (strain AV19 / DSM 6324 / JCM 9639 / NBRC 100938)).